Here is a 217-residue protein sequence, read N- to C-terminus: dITP/XTP pyrophosphatase (217 aa).

Substrate is bound at residue 7–12 (SRNKKK). The active-site Proton acceptor is D72. D72 serves as a coordination point for Mg(2+). Substrate-binding positions include S73, 163-166 (FGYD), K195, and 200-201 (HR).

This sequence belongs to the HAM1 NTPase family. In terms of assembly, homodimer. The cofactor is Mg(2+).

It catalyses the reaction XTP + H2O = XMP + diphosphate + H(+). The enzyme catalyses dITP + H2O = dIMP + diphosphate + H(+). The catalysed reaction is ITP + H2O = IMP + diphosphate + H(+). Its function is as follows. Pyrophosphatase that catalyzes the hydrolysis of nucleoside triphosphates to their monophosphate derivatives, with a high preference for the non-canonical purine nucleotides XTP (xanthosine triphosphate), dITP (deoxyinosine triphosphate) and ITP. Seems to function as a house-cleaning enzyme that removes non-canonical purine nucleotides from the nucleotide pool, thus preventing their incorporation into DNA/RNA and avoiding chromosomal lesions. This Corynebacterium jeikeium (strain K411) protein is dITP/XTP pyrophosphatase.